The following is a 431-amino-acid chain: MSISIETLEGLQRRVTVTVAADKIEAGYKEQLKGYAKNARVDGFRKGKVPHSIIEQRYGLAARQDVLSEEMQRAFFDVVIAEKINLAGRPTFTPNNYQPGQDFSFVATFEVFPEVELKGLENIEVEKPVVEITEADLDKMVDVLRKQQATFAETTEAAKADDRVTIDFVGSVDGEEFEGGKASDFVLAMGQGRMIPGFEEGIVGHKAGEQFDIDVIFPAEYHAENLKGKAAKFAITLKKVENIVLPELTEEFVKKFGSAKTVEELRVEIKKNMQRELKNALTTRVKNQVINGLLANNDIEVPSSAVAEEVDVLRQQAVQRFGGKPEMAAQLPAELFEVEAKRRVQVGLLLSSVITSNELKVDEDRVKETISELASAYEQPAEVVEYYAKNPRLTDNIRNVVLEEQAVEAVLAKAKVTEKASSFDEVMSHQG.

The PPIase FKBP-type domain maps to 161-246 (DDRVTIDFVG…LKKVENIVLP (86 aa)).

Belongs to the FKBP-type PPIase family. Tig subfamily.

The protein localises to the cytoplasm. It carries out the reaction [protein]-peptidylproline (omega=180) = [protein]-peptidylproline (omega=0). In terms of biological role, involved in protein export. Acts as a chaperone by maintaining the newly synthesized protein in an open conformation. Functions as a peptidyl-prolyl cis-trans isomerase. The chain is Trigger factor from Glaesserella parasuis serovar 5 (strain SH0165) (Haemophilus parasuis).